The primary structure comprises 255 residues: Imidazole glycerol phosphate synthase subunit HisF (255 aa).

Active-site residues include D11 and D130.

This sequence belongs to the HisA/HisF family. As to quaternary structure, heterodimer of HisH and HisF.

The protein localises to the cytoplasm. The catalysed reaction is 5-[(5-phospho-1-deoxy-D-ribulos-1-ylimino)methylamino]-1-(5-phospho-beta-D-ribosyl)imidazole-4-carboxamide + L-glutamine = D-erythro-1-(imidazol-4-yl)glycerol 3-phosphate + 5-amino-1-(5-phospho-beta-D-ribosyl)imidazole-4-carboxamide + L-glutamate + H(+). The protein operates within amino-acid biosynthesis; L-histidine biosynthesis; L-histidine from 5-phospho-alpha-D-ribose 1-diphosphate: step 5/9. In terms of biological role, IGPS catalyzes the conversion of PRFAR and glutamine to IGP, AICAR and glutamate. The HisF subunit catalyzes the cyclization activity that produces IGP and AICAR from PRFAR using the ammonia provided by the HisH subunit. This is Imidazole glycerol phosphate synthase subunit HisF from Campylobacter jejuni (strain RM1221).